We begin with the raw amino-acid sequence, 438 residues long: Trigger factor (438 aa).

The PPIase FKBP-type domain occupies Gly-163–Ala-248.

Belongs to the FKBP-type PPIase family. Tig subfamily.

The protein localises to the cytoplasm. It carries out the reaction [protein]-peptidylproline (omega=180) = [protein]-peptidylproline (omega=0). Functionally, involved in protein export. Acts as a chaperone by maintaining the newly synthesized protein in an open conformation. Functions as a peptidyl-prolyl cis-trans isomerase. This is Trigger factor from Desulforudis audaxviator (strain MP104C).